A 261-amino-acid polypeptide reads, in one-letter code: tRNA U34 carboxymethyltransferase (261 aa).

Residues Lys25, Trp39, Lys44, Gly63, 114-115 (VE), Tyr135, and Arg250 contribute to the carboxy-S-adenosyl-L-methionine site.

The protein belongs to the class I-like SAM-binding methyltransferase superfamily. CmoB family. Homotetramer.

It catalyses the reaction carboxy-S-adenosyl-L-methionine + 5-hydroxyuridine(34) in tRNA = 5-carboxymethoxyuridine(34) in tRNA + S-adenosyl-L-homocysteine + H(+). Its function is as follows. Catalyzes carboxymethyl transfer from carboxy-S-adenosyl-L-methionine (Cx-SAM) to 5-hydroxyuridine (ho5U) to form 5-carboxymethoxyuridine (cmo5U) at position 34 in tRNAs. The sequence is that of tRNA U34 carboxymethyltransferase from Helicobacter pylori (strain ATCC 700392 / 26695) (Campylobacter pylori).